We begin with the raw amino-acid sequence, 241 residues long: Ubiquinone biosynthesis O-methyltransferase (241 aa).

S-adenosyl-L-methionine contacts are provided by R46, G66, D87, and M131.

The protein belongs to the methyltransferase superfamily. UbiG/COQ3 family.

It catalyses the reaction a 3-demethylubiquinol + S-adenosyl-L-methionine = a ubiquinol + S-adenosyl-L-homocysteine + H(+). It carries out the reaction a 3-(all-trans-polyprenyl)benzene-1,2-diol + S-adenosyl-L-methionine = a 2-methoxy-6-(all-trans-polyprenyl)phenol + S-adenosyl-L-homocysteine + H(+). It functions in the pathway cofactor biosynthesis; ubiquinone biosynthesis. O-methyltransferase that catalyzes the 2 O-methylation steps in the ubiquinone biosynthetic pathway. The polypeptide is Ubiquinone biosynthesis O-methyltransferase (Bordetella avium (strain 197N)).